A 418-amino-acid polypeptide reads, in one-letter code: 3-isopropylmalate dehydratase large subunit (418 aa).

Positions 299, 359, and 362 each coordinate [4Fe-4S] cluster.

This sequence belongs to the aconitase/IPM isomerase family. LeuC type 2 subfamily. In terms of assembly, heterodimer of LeuC and LeuD. The cofactor is [4Fe-4S] cluster.

It catalyses the reaction (2R,3S)-3-isopropylmalate = (2S)-2-isopropylmalate. Its pathway is amino-acid biosynthesis; L-leucine biosynthesis; L-leucine from 3-methyl-2-oxobutanoate: step 2/4. Functionally, catalyzes the isomerization between 2-isopropylmalate and 3-isopropylmalate, via the formation of 2-isopropylmaleate. This chain is 3-isopropylmalate dehydratase large subunit, found in Nitratidesulfovibrio vulgaris (strain DSM 19637 / Miyazaki F) (Desulfovibrio vulgaris).